Reading from the N-terminus, the 204-residue chain is Somatotropin (204 aa).

Residues 1 to 17 (MDRVVLLLSVLSLGVSS) form the signal peptide. Q18 carries the pyrrolidone carboxylic acid modification. H36 contacts Zn(2+). The cysteines at positions 69 and 177 are disulfide-linked. Residue E186 participates in Zn(2+) binding. C194 and C202 are oxidised to a cystine.

This sequence belongs to the somatotropin/prolactin family.

It localises to the secreted. Growth hormone plays an important role in growth control and is involved in the regulation of several anabolic processes. Implicated as an osmoregulatory substance important for seawater adaptation. This is Somatotropin (gh) from Lates calcarifer (Barramundi).